Consider the following 195-residue polypeptide: Rubrerythrin (195 aa).

Residues 1–150 form the Ferritin-like diiron domain; it reads MKSLKGTKTA…KLAKNIEEGK (150 aa). Fe(3+) contacts are provided by Glu20, Glu53, Glu98, Glu101, Glu132, His135, Cys162, Cys165, Cys178, and Cys181. The 39-residue stretch at 157-195 folds into the Rubredoxin-like domain; sequence VVLWKCGNCGFIWEGAEAPLKCPACLHPQAYFEVFKETY.

Homodimer. Possesses two rubredoxin-like centers and two non-sulfur oxo-bridged di-iron centers per dimer. It depends on Fe(3+) as a cofactor.

Its subcellular location is the cytoplasm. May provide oxidative stress protection via catalytic reduction of intracellular hydrogen peroxide. This is Rubrerythrin (rbr) from Clostridium perfringens (strain 13 / Type A).